A 58-amino-acid polypeptide reads, in one-letter code: ATP synthase F(0) complex subunit k, mitochondrial (58 aa).

2 positions are modified to N6-acetyllysine; partial: lysine 16 and lysine 17. Residues 23-45 (TLTGRMNCVLATYGSIALIVLYF) form a helical membrane-spanning segment.

As to quaternary structure, component of the ATP synthase complex composed at least of ATP5F1A/subunit alpha, ATP5F1B/subunit beta, ATP5MC1/subunit c (homooctomer), MT-ATP6/subunit a, MT-ATP8/subunit 8, ATP5ME/subunit e, ATP5MF/subunit f, ATP5MG/subunit g, ATP5MK/subunit k, ATP5MJ/subunit j, ATP5F1C/subunit gamma, ATP5F1D/subunit delta, ATP5F1E/subunit epsilon, ATP5PF/subunit F6, ATP5PB/subunit b, ATP5PD/subunit d, ATP5PO/subunit OSCP. ATP synthase complex consists of a soluble F(1) head domain (subunits alpha(3) and beta(3)) - the catalytic core - and a membrane F(0) domain - the membrane proton channel (subunits c, a, 8, e, f, g, k and j). These two domains are linked by a central stalk (subunits gamma, delta, and epsilon) rotating inside the F1 region and a stationary peripheral stalk (subunits F6, b, d, and OSCP). The ATP synthase complex/complex V exists as a monomeric and a dimeric supercomplex that helps shape mitochondrial cristae to optimize proton flow.

The protein resides in the mitochondrion membrane. In terms of biological role, subunit k, of the mitochondrial membrane ATP synthase complex (F(1)F(0) ATP synthase or Complex V) that produces ATP from ADP in the presence of a proton gradient across the membrane which is generated by electron transport complexes of the respiratory chain. ATP synthase complex consist of a soluble F(1) head domain - the catalytic core - and a membrane F(1) domain - the membrane proton channel. These two domains are linked by a central stalk rotating inside the F(1) region and a stationary peripheral stalk. During catalysis, ATP synthesis in the catalytic domain of F(1) is coupled via a rotary mechanism of the central stalk subunits to proton translocation. In vivo, can only synthesize ATP although its ATP hydrolase activity can be activated artificially in vitro. Part of the complex F(0) domain. Required for dimerization of the ATP synthase complex and as such regulates ATP synthesis in the mitochondria. The sequence is that of ATP synthase F(0) complex subunit k, mitochondrial from Bos taurus (Bovine).